A 338-amino-acid chain; its full sequence is Ketol-acid reductoisomerase (NADP(+)) (338 aa).

One can recognise a KARI N-terminal Rossmann domain in the interval 1–181 (MNVFYDKDAD…GGGRAGIIET (181 aa)). Residues 24–27 (YGSQ), Arg-47, and Ser-52 each bind NADP(+). Residue His-107 is part of the active site. Gly-133 provides a ligand contact to NADP(+). In terms of domain architecture, KARI C-terminal knotted spans 182–327 (NFREETETDL…AKLRAMMPWI (146 aa)). Mg(2+) contacts are provided by Asp-190, Glu-194, Glu-226, and Glu-230. Ser-251 serves as a coordination point for substrate.

Belongs to the ketol-acid reductoisomerase family. Mg(2+) is required as a cofactor.

The enzyme catalyses (2R)-2,3-dihydroxy-3-methylbutanoate + NADP(+) = (2S)-2-acetolactate + NADPH + H(+). The catalysed reaction is (2R,3R)-2,3-dihydroxy-3-methylpentanoate + NADP(+) = (S)-2-ethyl-2-hydroxy-3-oxobutanoate + NADPH + H(+). It participates in amino-acid biosynthesis; L-isoleucine biosynthesis; L-isoleucine from 2-oxobutanoate: step 2/4. Its pathway is amino-acid biosynthesis; L-valine biosynthesis; L-valine from pyruvate: step 2/4. Functionally, involved in the biosynthesis of branched-chain amino acids (BCAA). Catalyzes an alkyl-migration followed by a ketol-acid reduction of (S)-2-acetolactate (S2AL) to yield (R)-2,3-dihydroxy-isovalerate. In the isomerase reaction, S2AL is rearranged via a Mg-dependent methyl migration to produce 3-hydroxy-3-methyl-2-ketobutyrate (HMKB). In the reductase reaction, this 2-ketoacid undergoes a metal-dependent reduction by NADPH to yield (R)-2,3-dihydroxy-isovalerate. In Burkholderia cenocepacia (strain ATCC BAA-245 / DSM 16553 / LMG 16656 / NCTC 13227 / J2315 / CF5610) (Burkholderia cepacia (strain J2315)), this protein is Ketol-acid reductoisomerase (NADP(+)).